Reading from the N-terminus, the 446-residue chain is Glutamyl-tRNA reductase (446 aa).

Substrate-binding positions include 49–52, Ser109, 114–116, and Gln120; these read TCNR and ETQ. Cys50 acts as the Nucleophile in catalysis. 189–194 provides a ligand contact to NADP(+); sequence GAGETG.

Belongs to the glutamyl-tRNA reductase family. Homodimer.

It catalyses the reaction (S)-4-amino-5-oxopentanoate + tRNA(Glu) + NADP(+) = L-glutamyl-tRNA(Glu) + NADPH + H(+). It participates in porphyrin-containing compound metabolism; protoporphyrin-IX biosynthesis; 5-aminolevulinate from L-glutamyl-tRNA(Glu): step 1/2. In terms of biological role, catalyzes the NADPH-dependent reduction of glutamyl-tRNA(Glu) to glutamate 1-semialdehyde (GSA). The polypeptide is Glutamyl-tRNA reductase (Exiguobacterium sibiricum (strain DSM 17290 / CCUG 55495 / CIP 109462 / JCM 13490 / 255-15)).